Reading from the N-terminus, the 179-residue chain is uncharacterized protein (179 aa).

This is an uncharacterized protein from Acanthamoeba polyphaga mimivirus (APMV).